Reading from the N-terminus, the 538-residue chain is Putative outer membrane porin BglH (538 aa).

A signal peptide spans Met-1 to Ala-25. Positions Lys-52–Thr-82 are disordered. The span at Ala-62–Gln-73 shows a compositional bias: polar residues.

Belongs to the porin LamB (TC 1.B.3) family.

Its subcellular location is the cell outer membrane. May be a sugar porin with a broad carbohydrate specificity. This chain is Putative outer membrane porin BglH (bglH), found in Escherichia coli O139:H28 (strain E24377A / ETEC).